Reading from the N-terminus, the 248-residue chain is ATP synthase subunit a (248 aa).

A run of 5 helical transmembrane segments spans residues 31–51, 90–110, 129–149, 195–215, and 216–236; these read GQVLIASWIAIALILTVVILG, VPYVGTLFLFIFVSNWMGNLF, INTTAGLALLTSIMYFVAGIS, VIAVLVLLVPLFIPVPVMVLF, and LFTGAIQALIFSTLSAAYIGE.

The protein belongs to the ATPase A chain family. As to quaternary structure, F-type ATPases have 2 components, CF(1) - the catalytic core - and CF(0) - the membrane proton channel. CF(1) has five subunits: alpha(3), beta(3), gamma(1), delta(1), epsilon(1). CF(0) has four main subunits: a, b, b' and c.

The protein resides in the cellular thylakoid membrane. Functionally, key component of the proton channel; it plays a direct role in the translocation of protons across the membrane. In Synechococcus sp. (strain JA-2-3B'a(2-13)) (Cyanobacteria bacterium Yellowstone B-Prime), this protein is ATP synthase subunit a.